A 497-amino-acid chain; its full sequence is 4,4'-diapolycopene oxygenase (497 aa).

It belongs to the carotenoid/retinoid oxidoreductase family. FAD serves as cofactor.

It carries out the reaction all-trans-4,4'-diapolycopene + 4 AH2 + 4 O2 = all-trans-4,4'-diapolycopene-4,4'-dial + 4 A + 6 H2O. The enzyme catalyses all-trans-4,4'-diaponeurosporene + 2 AH2 + 2 O2 = 4,4'-diaponeurosporenal + 2 A + 3 H2O. The protein operates within carotenoid biosynthesis. Involved in the biosynthesis of C30 carotenoids. Catalyzes the oxidation of the terminal methyl side groups of 4,4'-diapolycopene to yield 4,4'-diapolycopen-4,4'-dial via the aldehyde intermediate 4,4'-diapolycopen-al. Also able to catalyze the oxidation of the terminal methyl side group of 4,4'-diaponeurosporene to form 4,4'-diaponeurosporen-4-al. It has moderate to low activity on the C40 substrates neurosporene and lycopene, and has no detectable activity on zeta-carotene or beta-carotene. This is 4,4'-diapolycopene oxygenase from Methylomonas sp.